The following is a 199-amino-acid chain: Ribosome maturation factor RimM (199 aa).

Residues 95-168 (EDEFYHADLV…FVRVDPVAAG (74 aa)) enclose the PRC barrel domain. A disordered region spans residues 167 to 199 (AGLVEDEDGDAPREEDFDPKGRPRGPRDAGGNR). Over residues 176–193 (DAPREEDFDPKGRPRGPR) the composition is skewed to basic and acidic residues.

This sequence belongs to the RimM family. Binds ribosomal protein uS19.

It is found in the cytoplasm. Its function is as follows. An accessory protein needed during the final step in the assembly of 30S ribosomal subunit, possibly for assembly of the head region. Essential for efficient processing of 16S rRNA. May be needed both before and after RbfA during the maturation of 16S rRNA. It has affinity for free ribosomal 30S subunits but not for 70S ribosomes. This chain is Ribosome maturation factor RimM, found in Mesorhizobium japonicum (strain LMG 29417 / CECT 9101 / MAFF 303099) (Mesorhizobium loti (strain MAFF 303099)).